Consider the following 490-residue polypeptide: Calcium-dependent protein kinase 12 (490 aa).

A Protein kinase domain is found at 22 to 280; the sequence is YFLGQVLGQG…AHQVLCHPWI (259 aa). ATP is bound by residues 28–36 and Lys51; that span reads LGQGQFGTT. Residue Asp146 is the Proton acceptor of the active site. A Phosphoserine modification is found at Ser186. The autoinhibitory domain stretch occupies residues 286–316; sequence APDKPLDCAVVSRLKKFSAMNKLKKMALRVI. 4 consecutive EF-hand domains span residues 323–358, 359–394, 395–430, and 434–464; these read EEIG…VGSE, LMES…LNKL, EREE…FGIN, and LDEM…GNGT. Ca(2+) is bound by residues Asp336, Asp338, Ser340, Thr342, Glu347, Asp372, Asp374, Ser376, Thr378, Glu383, Asp408, Asp410, Ser412, Tyr414, Glu419, Asp442, Asp444, Asp446, Gln448, and Glu453.

This sequence belongs to the protein kinase superfamily. Ser/Thr protein kinase family. CDPK subfamily. In terms of assembly, interacts weakly with DI19. In terms of tissue distribution, ubiquitously expressed.

It catalyses the reaction L-seryl-[protein] + ATP = O-phospho-L-seryl-[protein] + ADP + H(+). The catalysed reaction is L-threonyl-[protein] + ATP = O-phospho-L-threonyl-[protein] + ADP + H(+). With respect to regulation, activated by calcium. Autophosphorylation may play an important role in the regulation of the kinase activity. Its function is as follows. May play a role in signal transduction pathways that involve calcium as a second messenger. This Arabidopsis thaliana (Mouse-ear cress) protein is Calcium-dependent protein kinase 12 (CPK12).